A 277-amino-acid polypeptide reads, in one-letter code: Large ribosomal subunit protein uL2 (277 aa).

2 disordered regions span residues 35 to 60 (EKQS…GHKQ) and 225 to 277 (MNPV…ANKR). Over residues 43 to 53 (RNNNGHITTRH) the composition is skewed to polar residues.

This sequence belongs to the universal ribosomal protein uL2 family. In terms of assembly, part of the 50S ribosomal subunit. Forms a bridge to the 30S subunit in the 70S ribosome.

In terms of biological role, one of the primary rRNA binding proteins. Required for association of the 30S and 50S subunits to form the 70S ribosome, for tRNA binding and peptide bond formation. It has been suggested to have peptidyltransferase activity; this is somewhat controversial. Makes several contacts with the 16S rRNA in the 70S ribosome. In Methylobacillus flagellatus (strain ATCC 51484 / DSM 6875 / VKM B-1610 / KT), this protein is Large ribosomal subunit protein uL2.